A 366-amino-acid chain; its full sequence is Holliday junction branch migration complex subunit RuvB (366 aa).

The tract at residues 1-49 is disordered; the sequence is MAIISSKKQPPEPNGQPNKRPESAPSVPKEKVLQPEAAIDEQGKQEESI. Residues 13–210 are large ATPase domain (RuvB-L); it reads PNGQPNKRPE…FGLIQKLRFY (198 aa). ATP is bound by residues Ile49, Arg50, Gly91, Lys94, Thr95, Thr96, 157 to 159, Arg200, Tyr210, and Arg247; that span reads EDY. Position 95 (Thr95) interacts with Mg(2+). The interval 211-281 is small ATPAse domain (RuvB-S); that stretch reads EVDELSQIVL…IAAEALQLFQ (71 aa). The tract at residues 284 to 366 is head domain (RuvB-H); sequence PCGLDWTDRR…TPPNEQLSLL (83 aa). Residues Arg339 and Arg344 each contribute to the DNA site.

It belongs to the RuvB family. As to quaternary structure, homohexamer. Forms an RuvA(8)-RuvB(12)-Holliday junction (HJ) complex. HJ DNA is sandwiched between 2 RuvA tetramers; dsDNA enters through RuvA and exits via RuvB. An RuvB hexamer assembles on each DNA strand where it exits the tetramer. Each RuvB hexamer is contacted by two RuvA subunits (via domain III) on 2 adjacent RuvB subunits; this complex drives branch migration. In the full resolvosome a probable DNA-RuvA(4)-RuvB(12)-RuvC(2) complex forms which resolves the HJ.

The protein localises to the cytoplasm. The enzyme catalyses ATP + H2O = ADP + phosphate + H(+). The RuvA-RuvB-RuvC complex processes Holliday junction (HJ) DNA during genetic recombination and DNA repair, while the RuvA-RuvB complex plays an important role in the rescue of blocked DNA replication forks via replication fork reversal (RFR). RuvA specifically binds to HJ cruciform DNA, conferring on it an open structure. The RuvB hexamer acts as an ATP-dependent pump, pulling dsDNA into and through the RuvAB complex. RuvB forms 2 homohexamers on either side of HJ DNA bound by 1 or 2 RuvA tetramers; 4 subunits per hexamer contact DNA at a time. Coordinated motions by a converter formed by DNA-disengaged RuvB subunits stimulates ATP hydrolysis and nucleotide exchange. Immobilization of the converter enables RuvB to convert the ATP-contained energy into a lever motion, pulling 2 nucleotides of DNA out of the RuvA tetramer per ATP hydrolyzed, thus driving DNA branch migration. The RuvB motors rotate together with the DNA substrate, which together with the progressing nucleotide cycle form the mechanistic basis for DNA recombination by continuous HJ branch migration. Branch migration allows RuvC to scan DNA until it finds its consensus sequence, where it cleaves and resolves cruciform DNA. The sequence is that of Holliday junction branch migration complex subunit RuvB from Nostoc sp. (strain PCC 7120 / SAG 25.82 / UTEX 2576).